Here is a 620-residue protein sequence, read N- to C-terminus: MALLQIAEPGQSPQPHQRRLAVGIDLGTTNSLVAALRSGLSEPLADAQGQVILPSAVRYHADRVEVGESARLAAPTDPLNTVLSVKRLMGRGLSDVKQLGEQLPYRFVEGESHMPFIETIQGPKSPVEVSAEVLKVLRQRAEAALGGELVGAVITVPAYFDDAQRQATKDAAKLAGLNVLRLLNEPTAAAVAYGLDQHAEGVVAIYDLGGGTFDISILRLTGGVFEVLATGGDTALGGDDFDHAIAGWIIEGAGLSADLDPGTQRSLLQAACAAKEALTGAASVEVVYGDWRATLTRDAFDALIEPMVARSLKACRRAVRDSNVELDEVQAVVMVGGSTRVPRVREAVAEMFGRQPLTEIDPDQVVAIGAAIQADTLAGNKREGGELLLLDVIPLSLGLETMGGLMEKVIPRNTTIPVARAQDFTTYKDGQTAMMVHVLQGERELISDCRSLARFELRGIPPMVAGAAKIRVTFQVDADGLLSVSARELGSGVEASIQVKPSYGLTDGEIAKMLKDSFQYAGDDKVARVLREQQVDAQRLIEAVQGALDADGERLLDAEERMVIELQMQELSELMRGTDGYAIEQQTKRLSQVTDAFAARRLDSTVKAALAGRNLNEIEE.

It belongs to the heat shock protein 70 family.

Functionally, chaperone involved in the maturation of iron-sulfur cluster-containing proteins. Has a low intrinsic ATPase activity which is markedly stimulated by HscB. The sequence is that of Chaperone protein HscA homolog from Pseudomonas fluorescens (strain ATCC BAA-477 / NRRL B-23932 / Pf-5).